Here is a 554-residue protein sequence, read N- to C-terminus: Undecaprenyl phosphate-alpha-4-amino-4-deoxy-L-arabinose arabinosyl transferase (554 aa).

The next 11 helical transmembrane spans lie at Leu4–Val24, Phe87–Leu107, Val115–Val135, Phe178–Ile198, Leu206–Leu226, Tyr262–Phe282, Glu293–Gly313, Leu315–Thr335, Val351–Leu371, Gln384–Leu404, and Ala414–Val434.

Belongs to the glycosyltransferase 83 family.

The protein localises to the cell inner membrane. The enzyme catalyses 4-amino-4-deoxy-alpha-L-arabinopyranosyl di-trans,octa-cis-undecaprenyl phosphate + lipid IVA = lipid IIA + di-trans,octa-cis-undecaprenyl phosphate.. The protein operates within lipopolysaccharide metabolism; 4-amino-4-deoxy-beta-L-arabinose-lipid A biosynthesis. Functionally, catalyzes the transfer of the L-Ara4N moiety of the glycolipid undecaprenyl phosphate-alpha-L-Ara4N to lipid A. The modified arabinose is attached to lipid A and is required for resistance to polymyxin and cationic antimicrobial peptides. The polypeptide is Undecaprenyl phosphate-alpha-4-amino-4-deoxy-L-arabinose arabinosyl transferase (Yersinia pseudotuberculosis serotype O:1b (strain IP 31758)).